The sequence spans 300 residues: Acetylglutamate kinase (300 aa).

Substrate-binding positions include 68–69 (GG), arginine 90, and asparagine 195.

It belongs to the acetylglutamate kinase family. ArgB subfamily.

It is found in the cytoplasm. The catalysed reaction is N-acetyl-L-glutamate + ATP = N-acetyl-L-glutamyl 5-phosphate + ADP. It participates in amino-acid biosynthesis; L-arginine biosynthesis; N(2)-acetyl-L-ornithine from L-glutamate: step 2/4. Catalyzes the ATP-dependent phosphorylation of N-acetyl-L-glutamate. This Stutzerimonas stutzeri (strain A1501) (Pseudomonas stutzeri) protein is Acetylglutamate kinase.